We begin with the raw amino-acid sequence, 462 residues long: Proline--tRNA ligase (462 aa).

The protein belongs to the class-II aminoacyl-tRNA synthetase family. ProS type 3 subfamily. As to quaternary structure, homodimer.

The protein localises to the cytoplasm. The enzyme catalyses tRNA(Pro) + L-proline + ATP = L-prolyl-tRNA(Pro) + AMP + diphosphate. Catalyzes the attachment of proline to tRNA(Pro) in a two-step reaction: proline is first activated by ATP to form Pro-AMP and then transferred to the acceptor end of tRNA(Pro). The polypeptide is Proline--tRNA ligase (Thermoplasma volcanium (strain ATCC 51530 / DSM 4299 / JCM 9571 / NBRC 15438 / GSS1)).